Reading from the N-terminus, the 380-residue chain is Chorismate synthase (380 aa).

R47 provides a ligand contact to NADP(+). FMN is bound by residues 124-126 (RSS), G288, 303-307 (KPTST), and R329.

Belongs to the chorismate synthase family. As to quaternary structure, homotetramer. It depends on FMNH2 as a cofactor.

The catalysed reaction is 5-O-(1-carboxyvinyl)-3-phosphoshikimate = chorismate + phosphate. It functions in the pathway metabolic intermediate biosynthesis; chorismate biosynthesis; chorismate from D-erythrose 4-phosphate and phosphoenolpyruvate: step 7/7. Catalyzes the anti-1,4-elimination of the C-3 phosphate and the C-6 proR hydrogen from 5-enolpyruvylshikimate-3-phosphate (EPSP) to yield chorismate, which is the branch point compound that serves as the starting substrate for the three terminal pathways of aromatic amino acid biosynthesis. This reaction introduces a second double bond into the aromatic ring system. This Leptospira interrogans serogroup Icterohaemorrhagiae serovar copenhageni (strain Fiocruz L1-130) protein is Chorismate synthase.